We begin with the raw amino-acid sequence, 86 residues long: BolA-like protein 2 (86 aa).

Residue methionine 1 is modified to N-acetylmethionine.

Belongs to the BolA/IbaG family. In terms of assembly, interacts with GLRX3; forms a heterotrimeric complex composed by two BOLA2 molecules and one GLRX3 molecule; linked by [2Fe-2S] clusters.

The protein resides in the cytoplasm. It localises to the nucleus. Functionally, acts as a cytosolic iron-sulfur (Fe-S) cluster assembly factor that facilitates [2Fe-2S] cluster insertion into a subset of cytosolic proteins. Acts together with the monothiol glutaredoxin GLRX3. The protein is BolA-like protein 2 (BOLA2) of Homo sapiens (Human).